A 170-amino-acid chain; its full sequence is Protein SprT (170 aa).

The 144-residue stretch at 22 to 165 (LQLANQHLGT…RQCGEKLQFI (144 aa)) folds into the SprT-like domain. Residue histidine 78 participates in Zn(2+) binding. The active site involves glutamate 79. Residue histidine 82 participates in Zn(2+) binding.

Belongs to the SprT family. Requires Zn(2+) as cofactor.

Its subcellular location is the cytoplasm. In Yersinia pseudotuberculosis serotype O:1b (strain IP 31758), this protein is Protein SprT.